The primary structure comprises 204 residues: Small ribosomal subunit protein uS4 (204 aa).

The 63-residue stretch at R95 to N157 folds into the S4 RNA-binding domain.

This sequence belongs to the universal ribosomal protein uS4 family. In terms of assembly, part of the 30S ribosomal subunit. Contacts protein S5. The interaction surface between S4 and S5 is involved in control of translational fidelity.

In terms of biological role, one of the primary rRNA binding proteins, it binds directly to 16S rRNA where it nucleates assembly of the body of the 30S subunit. With S5 and S12 plays an important role in translational accuracy. The polypeptide is Small ribosomal subunit protein uS4 (Treponema pallidum (strain Nichols)).